A 476-amino-acid chain; its full sequence is Bifunctional protein HldE (476 aa).

The segment at 1–319 is ribokinase; sequence MKITLPEYDK…ANAVYSQQEI (319 aa). 196 to 199 serves as a coordination point for ATP; sequence NLAE. The active site involves Asp-265. Residues 345 to 476 form a cytidylyltransferase region; sequence MTNGCFDILH…EIIKTIRNNS (132 aa).

The protein in the N-terminal section; belongs to the carbohydrate kinase PfkB family. It in the C-terminal section; belongs to the cytidylyltransferase family. Homodimer.

It catalyses the reaction D-glycero-beta-D-manno-heptose 7-phosphate + ATP = D-glycero-beta-D-manno-heptose 1,7-bisphosphate + ADP + H(+). The enzyme catalyses D-glycero-beta-D-manno-heptose 1-phosphate + ATP + H(+) = ADP-D-glycero-beta-D-manno-heptose + diphosphate. Its pathway is nucleotide-sugar biosynthesis; ADP-L-glycero-beta-D-manno-heptose biosynthesis; ADP-L-glycero-beta-D-manno-heptose from D-glycero-beta-D-manno-heptose 7-phosphate: step 1/4. The protein operates within nucleotide-sugar biosynthesis; ADP-L-glycero-beta-D-manno-heptose biosynthesis; ADP-L-glycero-beta-D-manno-heptose from D-glycero-beta-D-manno-heptose 7-phosphate: step 3/4. Catalyzes the phosphorylation of D-glycero-D-manno-heptose 7-phosphate at the C-1 position to selectively form D-glycero-beta-D-manno-heptose-1,7-bisphosphate. Functionally, catalyzes the ADP transfer from ATP to D-glycero-beta-D-manno-heptose 1-phosphate, yielding ADP-D-glycero-beta-D-manno-heptose. This chain is Bifunctional protein HldE, found in Psychromonas ingrahamii (strain DSM 17664 / CCUG 51855 / 37).